The sequence spans 341 residues: S-adenosylmethionine:tRNA ribosyltransferase-isomerase (341 aa).

It belongs to the QueA family. As to quaternary structure, monomer.

The protein localises to the cytoplasm. It carries out the reaction 7-aminomethyl-7-carbaguanosine(34) in tRNA + S-adenosyl-L-methionine = epoxyqueuosine(34) in tRNA + adenine + L-methionine + 2 H(+). Its pathway is tRNA modification; tRNA-queuosine biosynthesis. Transfers and isomerizes the ribose moiety from AdoMet to the 7-aminomethyl group of 7-deazaguanine (preQ1-tRNA) to give epoxyqueuosine (oQ-tRNA). This is S-adenosylmethionine:tRNA ribosyltransferase-isomerase from Caldanaerobacter subterraneus subsp. tengcongensis (strain DSM 15242 / JCM 11007 / NBRC 100824 / MB4) (Thermoanaerobacter tengcongensis).